We begin with the raw amino-acid sequence, 168 residues long: Protein-export protein SecB (168 aa).

Belongs to the SecB family. Homotetramer, a dimer of dimers. One homotetramer interacts with 1 SecA dimer.

The protein resides in the cytoplasm. One of the proteins required for the normal export of preproteins out of the cell cytoplasm. It is a molecular chaperone that binds to a subset of precursor proteins, maintaining them in a translocation-competent state. It also specifically binds to its receptor SecA. This chain is Protein-export protein SecB, found in Glaesserella parasuis serovar 5 (strain SH0165) (Haemophilus parasuis).